Here is a 141-residue protein sequence, read N- to C-terminus: Large ribosomal subunit protein uL11 (141 aa).

It belongs to the universal ribosomal protein uL11 family. Part of the ribosomal stalk of the 50S ribosomal subunit. Interacts with L10 and the large rRNA to form the base of the stalk. L10 forms an elongated spine to which L12 dimers bind in a sequential fashion forming a multimeric L10(L12)X complex. Post-translationally, one or more lysine residues are methylated.

Its function is as follows. Forms part of the ribosomal stalk which helps the ribosome interact with GTP-bound translation factors. This chain is Large ribosomal subunit protein uL11, found in Lactobacillus johnsonii (strain CNCM I-12250 / La1 / NCC 533).